Reading from the N-terminus, the 933-residue chain is Envelope glycoprotein B (933 aa).

The N-terminal stretch at M1–A36 is a signal peptide. A compositionally biased stretch (low complexity) spans A36–P49. The segment at A36–R115 is disordered. Topologically, residues A37–P797 are virion surface. Acidic residues predominate over residues A54–D69. N-linked (GlcNAc...) asparagine; by host glycans are attached at residues N107 and N161. Cystine bridges form between C136/C596, C153/C552, C227/C291, C384/C432, and C619/C656. Involved in fusion and/or binding to host membrane stretches follow at residues T193 to Y199 and A278 to T285. Residues N418 and N450 are each glycosylated (N-linked (GlcNAc...) asparagine; by host). 2 N-linked (GlcNAc...) asparagine; by host glycosylation sites follow: N697 and N747. 2 hydrophobic membrane proximal region regions span residues I742–S795 and L754–S795. The helical transmembrane segment at F798 to M818 threads the bilayer. The Intravirion segment spans residues R819–P933. Positions Y881–L884 match the Golgi targeting motif. The Internalization motif motif lies at Y920–L923.

The protein belongs to the herpesviridae glycoprotein B family. As to quaternary structure, homotrimer; disulfide-linked. Binds to heparan sulfate proteoglycans. Interacts with gH/gL heterodimer.

The protein localises to the virion membrane. It localises to the host cell membrane. It is found in the host endosome membrane. Its subcellular location is the host Golgi apparatus membrane. Functionally, envelope glycoprotein that forms spikes at the surface of virion envelope. Essential for the initial attachment to heparan sulfate moieties of the host cell surface proteoglycans. Involved in fusion of viral and cellular membranes leading to virus entry into the host cell. Following initial binding to its host receptors, membrane fusion is mediated by the fusion machinery composed at least of gB and the heterodimer gH/gL. May be involved in the fusion between the virion envelope and the outer nuclear membrane during virion egress. The chain is Envelope glycoprotein B from Herpesvirus ateles type 1 (strain Lennette).